The sequence spans 473 residues: Photosystem II CP43 reaction center protein (473 aa).

Positions 1–14 (MKTLYSLRRFYPVE) are excised as a propeptide. N-acetylthreonine is present on Thr-15. Thr-15 carries the phosphothreonine modification. A run of 5 helical transmembrane segments spans residues 69 to 93 (LFEV…PHLA), 134 to 155 (LLGP…KDRN), 178 to 200 (KALY…RKIT), 255 to 275 (KPFA…LSYS), and 291 to 312 (WFNN…ASQA). Position 367 (Glu-367) interacts with [CaMn4O5] cluster. Residues 447 to 471 (RARAAAAGFEKGIDRDFEPALSMTP) traverse the membrane as a helical segment.

Belongs to the PsbB/PsbC family. PsbC subfamily. PSII is composed of 1 copy each of membrane proteins PsbA, PsbB, PsbC, PsbD, PsbE, PsbF, PsbH, PsbI, PsbJ, PsbK, PsbL, PsbM, PsbT, PsbX, PsbY, PsbZ, Psb30/Ycf12, at least 3 peripheral proteins of the oxygen-evolving complex and a large number of cofactors. It forms dimeric complexes. Requires Binds multiple chlorophylls and provides some of the ligands for the Ca-4Mn-5O cluster of the oxygen-evolving complex. It may also provide a ligand for a Cl- that is required for oxygen evolution. PSII binds additional chlorophylls, carotenoids and specific lipids. as cofactor.

Its subcellular location is the plastid. The protein localises to the chloroplast thylakoid membrane. In terms of biological role, one of the components of the core complex of photosystem II (PSII). It binds chlorophyll and helps catalyze the primary light-induced photochemical processes of PSII. PSII is a light-driven water:plastoquinone oxidoreductase, using light energy to abstract electrons from H(2)O, generating O(2) and a proton gradient subsequently used for ATP formation. The chain is Photosystem II CP43 reaction center protein from Oenothera argillicola (Appalachian evening primrose).